Consider the following 507-residue polypeptide: Maturase K (507 aa).

The protein belongs to the intron maturase 2 family. MatK subfamily.

It localises to the plastid. The protein resides in the chloroplast. In terms of biological role, usually encoded in the trnK tRNA gene intron. Probably assists in splicing its own and other chloroplast group II introns. The chain is Maturase K from Cupaniopsis anacardioides (Carrotwood).